The primary structure comprises 373 residues: Opsin Rh1 (373 aa).

Residues 1–49 (MESFAVAAAQLGPHFAPLSNGSVVDKVTPDMAHLISPYWNQFPAMDPIW) are Extracellular-facing. An N-linked (GlcNAc...) asparagine glycan is attached at Asn-20. Residues 50–74 (AKILTAYMIMIGMISWCGNGVVIYI) form a helical membrane-spanning segment. Residues 75–86 (FATTKSLRTPAN) are Cytoplasmic-facing. Residues 87–112 (LLVINLAISDFGIMITNTPMMGINLY) traverse the membrane as a helical segment. Topologically, residues 113 to 126 (FETWVLGPMMCDIY) are extracellular. A disulfide bridge links Cys-123 with Cys-200. Residues 127-146 (AGLGSAFGCSSIWSMCMISL) traverse the membrane as a helical segment. Topologically, residues 147–165 (DRYQVIVKGMAGRPMTIPL) are cytoplasmic. Residues 166–189 (ALGKIAYIWFMSSIWCLAPAFGWS) traverse the membrane as a helical segment. Topologically, residues 190-213 (RYVPEGNLTSCGIDYLERDWNPRS) are extracellular. Asn-196 carries an N-linked (GlcNAc...) asparagine glycan. Residues 214 to 241 (YLIFYSIFVYYIPLFLICYSYWFIIAAV) traverse the membrane as a helical segment. At 242–276 (SAHEKAMREQAKKMNVKSLRSSEDAEKSAEGKLAK) the chain is on the cytoplasmic side. Residues 277-300 (VALVTITLWFMAWTPYLVINCMGL) form a helical membrane-spanning segment. The Extracellular portion of the chain corresponds to 301–307 (FKFEGLT). Residues 308 to 332 (PLNTIWGACFAKSAACYNPIVYGIS) form a helical membrane-spanning segment. Residue Lys-319 is modified to N6-(retinylidene)lysine. Over 333–373 (HPKYRLALKEKCPCCVFGKVDDGKSSDAQSQATASEAESKA) the chain is Cytoplasmic. Residues 354 to 373 (DGKSSDAQSQATASEAESKA) form a disordered region. Low complexity predominate over residues 358 to 373 (SDAQSQATASEAESKA).

The protein belongs to the G-protein coupled receptor 1 family. Opsin subfamily. Phosphorylated on some or all of the serine and threonine residues present in the C-terminal region.

It is found in the cell projection. Its subcellular location is the rhabdomere membrane. Functionally, visual pigments are the light-absorbing molecules that mediate vision. They consist of an apoprotein, opsin, covalently linked to cis-retinal. The protein is Opsin Rh1 (ninaE) of Drosophila melanogaster (Fruit fly).